A 187-amino-acid chain; its full sequence is Aminodeoxychorismate synthase component 2 (187 aa).

The 187-residue stretch at 1-187 (MILLIDNYDS…HQLLANFLHR (187 aa)) folds into the Glutamine amidotransferase type-1 domain. Residues cysteine 79, histidine 168, and glutamate 170 contribute to the active site.

In terms of assembly, monomer. Heterodimer consisting of two non-identical subunits: a glutamine amidotransferase subunit (PabA) and a aminodeoxychorismate synthase subunit (PabB).

The catalysed reaction is chorismate + L-glutamine = 4-amino-4-deoxychorismate + L-glutamate. The protein operates within cofactor biosynthesis; tetrahydrofolate biosynthesis; 4-aminobenzoate from chorismate: step 1/2. With respect to regulation, inhibited by 6-diazo-5-oxo-L-norleucine (DON). The inhibition is competitive with glutamine, but uncompetitive with chorismate. Its function is as follows. Part of a heterodimeric complex that catalyzes the two-step biosynthesis of 4-amino-4-deoxychorismate (ADC), a precursor of p-aminobenzoate (PABA) and tetrahydrofolate. In the first step, a glutamine amidotransferase (PabA) generates ammonia as a substrate that, along with chorismate, is used in the second step, catalyzed by aminodeoxychorismate synthase (PabB) to produce ADC. PabA converts glutamine into glutamate only in the presence of stoichiometric amounts of PabB. This chain is Aminodeoxychorismate synthase component 2, found in Escherichia coli (strain K12).